The sequence spans 743 residues: Cap-specific mRNA (nucleoside-2'-O-)-methyltransferase 2 (743 aa).

Residues 113-326 (ELCTQAWAKF…LYIVCLDYQA (214 aa)) enclose the Adrift-type SAM-dependent 2'-O-MTase domain. Lys-121 is a catalytic residue. The S-adenosyl-L-methionine site is built by Gly-152, Trp-171, and Asp-239. Residue Asp-239 is part of the active site. The Proton acceptor role is filled by Lys-279.

Its subcellular location is the nucleus. It is found in the cytoplasm. The catalysed reaction is a 5'-end (N(7)-methyl 5'-triphosphoguanosine)-(2'-O-methyl-ribonucleoside)-(ribonucleotide) in mRNA + S-adenosyl-L-methionine = a 5'-end (N(7)-methyl 5'-triphosphoguanosine)-(2'-O-methyl-ribonucleoside)-(2'-O-methyl-ribonucleotide) in mRNA + S-adenosyl-L-homocysteine + H(+). Functionally, S-adenosyl-L-methionine-dependent methyltransferase that mediates mRNA cap2 2'-O-ribose methylation to the 5'-cap structure of mRNAs. Methylates the ribose of the second nucleotide of a m(7)GpppG-capped mRNA and small nuclear RNA (snRNA) (cap0) to produce m(7)GpppRmpNm (cap2). This chain is Cap-specific mRNA (nucleoside-2'-O-)-methyltransferase 2 (cmtr2), found in Danio rerio (Zebrafish).